We begin with the raw amino-acid sequence, 239 residues long: Tetraspanin-9 (239 aa).

The Cytoplasmic segment spans residues 1–13 (MARGCLCCLKYMM). The chain crosses the membrane as a helical span at residues 14–34 (FLFNLIFWLCGCGLLGVGIWL). Residues 35–55 (SVSQGNFATFSPSFPSLSAAN) are Extracellular-facing. Residues 56–76 (LVIAIGTIVMVTGFLGCLGAI) traverse the membrane as a helical segment. Over 77–85 (KENKCLLLS) the chain is Cytoplasmic. The chain crosses the membrane as a helical span at residues 86–106 (FFIVLLVILLAELILLILFFV). The Extracellular segment spans residues 107-203 (YMDKVNENAK…VKMWFDDNKH (97 aa)). Asn180 carries an N-linked (GlcNAc...) asparagine glycan. The chain crosses the membrane as a helical span at residues 204–224 (VLGTVGMCILIMQILGMAFSM). At 225–239 (TLFQHIHRTGKKYDA) the chain is on the cytoplasmic side.

This sequence belongs to the tetraspanin (TM4SF) family. In terms of assembly, found in a complex with GP6. In terms of processing, glycosylated. As to expression, expressed in megakaryocytes and platelets (at protein level).

The protein localises to the membrane. The protein is Tetraspanin-9 (TSPAN9) of Homo sapiens (Human).